The following is a 341-amino-acid chain: Tetraacyldisaccharide 4'-kinase (341 aa).

ATP is bound at residue 54–61; that stretch reads TVGGAGKT.

The protein belongs to the LpxK family.

The enzyme catalyses a lipid A disaccharide + ATP = a lipid IVA + ADP + H(+). It functions in the pathway glycolipid biosynthesis; lipid IV(A) biosynthesis; lipid IV(A) from (3R)-3-hydroxytetradecanoyl-[acyl-carrier-protein] and UDP-N-acetyl-alpha-D-glucosamine: step 6/6. Functionally, transfers the gamma-phosphate of ATP to the 4'-position of a tetraacyldisaccharide 1-phosphate intermediate (termed DS-1-P) to form tetraacyldisaccharide 1,4'-bis-phosphate (lipid IVA). This is Tetraacyldisaccharide 4'-kinase from Brucella ovis (strain ATCC 25840 / 63/290 / NCTC 10512).